The chain runs to 87 residues: Small ribosomal subunit protein uS17 (87 aa).

The protein belongs to the universal ribosomal protein uS17 family. Part of the 30S ribosomal subunit.

In terms of biological role, one of the primary rRNA binding proteins, it binds specifically to the 5'-end of 16S ribosomal RNA. The chain is Small ribosomal subunit protein uS17 from Staphylococcus aureus (strain Mu3 / ATCC 700698).